Reading from the N-terminus, the 419-residue chain is Tol-Pal system protein TolB (419 aa).

The N-terminal stretch at 1–17 (MRFIGLVLLLLSVKLFG) is a signal peptide.

Belongs to the TolB family. The Tol-Pal system is composed of five core proteins: the inner membrane proteins TolA, TolQ and TolR, the periplasmic protein TolB and the outer membrane protein Pal. They form a network linking the inner and outer membranes and the peptidoglycan layer.

The protein resides in the periplasm. Functionally, part of the Tol-Pal system, which plays a role in outer membrane invagination during cell division and is important for maintaining outer membrane integrity. The polypeptide is Tol-Pal system protein TolB (Helicobacter hepaticus (strain ATCC 51449 / 3B1)).